Here is a 504-residue protein sequence, read N- to C-terminus: MTQAILELNGIEKAFPGVKALDGACLNVYPGKVMALMGENGAGKSTLMKSLTGIYAMDAGEIRYEGKAVNFNGPKHSQESGISIIHQELNLIPELTIAENIFLGREKTNAFGGIKWSEMYKDADALLKRLNVKHHSRQLLGELSLGEQQMVEIAKALSFKSKVIIMDEPTDALTDTETESLFKVINELRDEGCGIVYISHRLKEIFEICDDITVLRDGKFIGERVVADIDEDTLIEMMVGRRLDEQYPRIDVQHGEKSLELFDVSGPGVHNVSFSLDRGEILGISGLMGAGRTELMKIIYGALPMTCGAIKLNNKMINPISPRDGLANGIAYISEDRKGDGLVLGLSVKENMSICSLDQLSKGIQLDHHAEVTAVEDFIRLFNIKTPTRDQIIGNLSGGNQQKVAIAKGLMTRPKVLILDEPTRGVDVGAKKEIYQLINQFKAEGMSIILVSSEMPEVLGMSDRILVMHEGRISGEFMAKDADQEKLLACAVGKTVEQNVEVTA.

ABC transporter domains are found at residues 6–242 (LELN…VGRR) and 250–495 (IDVQ…VGKT). Residue 38 to 45 (GENGAGKS) coordinates ATP.

The protein belongs to the ABC transporter superfamily. Ribose importer (TC 3.A.1.2.1) family. As to quaternary structure, the complex is composed of an ATP-binding protein (RbsA), two transmembrane proteins (RbsC) and a solute-binding protein (RbsB).

Its subcellular location is the cell inner membrane. The enzyme catalyses D-ribose(out) + ATP + H2O = D-ribose(in) + ADP + phosphate + H(+). Part of the ABC transporter complex RbsABC involved in ribose import. Responsible for energy coupling to the transport system. The sequence is that of Ribose import ATP-binding protein RbsA from Aliivibrio fischeri (strain ATCC 700601 / ES114) (Vibrio fischeri).